The primary structure comprises 468 residues: Zinc finger CCCH domain-containing protein 32 (468 aa).

Residues 1-25 are disordered; the sequence is MYARNPPLNGSQSAQAPDWTPADAD. 5 C3H1-type zinc fingers span residues 45 to 73, 90 to 118, 136 to 164, 289 to 317, and 335 to 363; these read RPGA…HPRD, RFGE…HPKN, REGD…HPQP, RPGE…HPRD, and RPGV…HPMG.

Its subcellular location is the nucleus. The protein is Zinc finger CCCH domain-containing protein 32 of Arabidopsis thaliana (Mouse-ear cress).